A 178-amino-acid polypeptide reads, in one-letter code: NADH-quinone oxidoreductase subunit B 1 (178 aa).

Positions 39, 40, 104, and 135 each coordinate [4Fe-4S] cluster.

It belongs to the complex I 20 kDa subunit family. NDH-1 is composed of 14 different subunits. Subunits NuoB, C, D, E, F, and G constitute the peripheral sector of the complex. The cofactor is [4Fe-4S] cluster.

It localises to the cell inner membrane. The enzyme catalyses a quinone + NADH + 5 H(+)(in) = a quinol + NAD(+) + 4 H(+)(out). NDH-1 shuttles electrons from NADH, via FMN and iron-sulfur (Fe-S) centers, to quinones in the respiratory chain. The immediate electron acceptor for the enzyme in this species is believed to be a menaquinone. Couples the redox reaction to proton translocation (for every two electrons transferred, four hydrogen ions are translocated across the cytoplasmic membrane), and thus conserves the redox energy in a proton gradient. This Cytophaga hutchinsonii (strain ATCC 33406 / DSM 1761 / CIP 103989 / NBRC 15051 / NCIMB 9469 / D465) protein is NADH-quinone oxidoreductase subunit B 1.